Reading from the N-terminus, the 305-residue chain is Exosome complex component RRP45 (305 aa).

This sequence belongs to the RNase PH family. As to quaternary structure, component of the RNA exosome complex. Specifically part of the catalytically inactive RNA exosome core complex (Exo-9) which may associate with the catalytic subunits RRP6 and DIS3 in cytoplasmic- and nuclear-specific RNA exosome complex forms. Exo-9 is formed by a hexameric base ring of RNase PH domain-containing subunits and a cap ring consisting of CSL4, RRP4 and RRP40. Interacts with LRP1.

The protein localises to the cytoplasm. The protein resides in the nucleus. It localises to the nucleolus. Its function is as follows. Non-catalytic component of the RNA exosome complex which has 3'-&gt;5' exoribonuclease activity and participates in a multitude of cellular RNA processing and degradation events. In the nucleus, the RNA exosome complex is involved in proper maturation of stable RNA species such as rRNA, snRNA and snoRNA, in the elimination of RNA processing by-products and non-coding 'pervasive' transcripts, such as antisense RNA species and cryptic unstable transcripts (CUTs), and of mRNAs with processing defects, thereby limiting or excluding their export to the cytoplasm. In the cytoplasm, the RNA exosome complex is involved in general mRNA turnover and in RNA surveillance pathways, preventing translation of aberrant mRNAs. The catalytic inactive RNA exosome core complex of 9 subunits (Exo-9) is proposed to play a pivotal role in the binding and presentation of RNA for ribonucleolysis, and to serve as a scaffold for the association with catalytic subunits and accessory proteins or complexes. RRP45 is part of the hexameric ring of RNase PH domain-containing subunits proposed to form a central channel which threads RNA substrates for degradation. In Saccharomyces cerevisiae (strain ATCC 204508 / S288c) (Baker's yeast), this protein is Exosome complex component RRP45 (RRP45).